An 80-amino-acid chain; its full sequence is Trefoil factor 3 (80 aa).

A signal peptide spans methionine 1–alanine 23. Residues asparagine 30–leucine 73 enclose the P-type domain. 3 disulfides stabilise this stretch: cysteine 32–cysteine 58, cysteine 42–cysteine 57, and cysteine 52–cysteine 69.

Monomer. Homodimer; disulfide-linked.

The protein localises to the secreted. Its subcellular location is the extracellular space. It is found in the extracellular matrix. It localises to the cytoplasm. Involved in the maintenance and repair of the intestinal mucosa. Promotes the mobility of epithelial cells in healing processes (motogen). In Canis lupus familiaris (Dog), this protein is Trefoil factor 3 (TFF3).